A 40-amino-acid chain; its full sequence is Photosystem II reaction center protein J (40 aa).

The helical transmembrane segment at 8–28 (IPLWLIGTLTGILVIGLIGIF) threads the bilayer.

This sequence belongs to the PsbJ family. As to quaternary structure, PSII is composed of 1 copy each of membrane proteins PsbA, PsbB, PsbC, PsbD, PsbE, PsbF, PsbH, PsbI, PsbJ, PsbK, PsbL, PsbM, PsbT, PsbX, PsbY, PsbZ, Psb30/Ycf12, at least 3 peripheral proteins of the oxygen-evolving complex and a large number of cofactors. It forms dimeric complexes.

The protein resides in the plastid. The protein localises to the chloroplast thylakoid membrane. One of the components of the core complex of photosystem II (PSII). PSII is a light-driven water:plastoquinone oxidoreductase that uses light energy to abstract electrons from H(2)O, generating O(2) and a proton gradient subsequently used for ATP formation. It consists of a core antenna complex that captures photons, and an electron transfer chain that converts photonic excitation into a charge separation. This is Photosystem II reaction center protein J from Phalaenopsis aphrodite subsp. formosana (Moth orchid).